A 62-amino-acid chain; its full sequence is Toxin Ct28 (62 aa).

Residues Met1–Ser22 form the signal peptide. Cystine bridges form between Cys29–Cys51, Cys35–Cys56, and Cys39–Cys58. Residue Asn61 is modified to Asparagine amide.

Belongs to the short scorpion toxin superfamily. Potassium channel inhibitor family. Alpha-KTx 02 subfamily. In terms of tissue distribution, expressed by the venom gland.

It is found in the secreted. In terms of biological role, blocks voltage-gated potassium channels. This chain is Toxin Ct28, found in Centruroides tecomanus (Scorpion).